Reading from the N-terminus, the 109-residue chain is Nucleoid-associated protein PC1_1077 (109 aa).

The protein belongs to the YbaB/EbfC family. Homodimer.

The protein resides in the cytoplasm. Its subcellular location is the nucleoid. Binds to DNA and alters its conformation. May be involved in regulation of gene expression, nucleoid organization and DNA protection. This chain is Nucleoid-associated protein PC1_1077, found in Pectobacterium carotovorum subsp. carotovorum (strain PC1).